The primary structure comprises 259 residues: uncharacterized protein (259 aa).

Residues 19 to 249 enclose the Radical SAM core domain; the sequence is TKIPGAKYVI…DEVINTIKKK (231 aa). Residues Cys34, Cys38, and Cys41 each contribute to the [4Fe-4S] cluster site.

It depends on [4Fe-4S] cluster as a cofactor.

This is an uncharacterized protein from Methanocaldococcus jannaschii (strain ATCC 43067 / DSM 2661 / JAL-1 / JCM 10045 / NBRC 100440) (Methanococcus jannaschii).